Consider the following 219-residue polypeptide: Urease accessory protein UreG (219 aa).

The tract at residues 1–20 (MSALHSIPHRSKKLPPLRVG) is disordered. 23-30 (GPVGSGKT) is a GTP binding site.

The protein belongs to the SIMIBI class G3E GTPase family. UreG subfamily. Homodimer. UreD, UreF and UreG form a complex that acts as a GTP-hydrolysis-dependent molecular chaperone, activating the urease apoprotein by helping to assemble the nickel containing metallocenter of UreC. The UreE protein probably delivers the nickel.

Its subcellular location is the cytoplasm. Functionally, facilitates the functional incorporation of the urease nickel metallocenter. This process requires GTP hydrolysis, probably effectuated by UreG. This chain is Urease accessory protein UreG, found in Methylibium petroleiphilum (strain ATCC BAA-1232 / LMG 22953 / PM1).